The primary structure comprises 75 residues: Large ribosomal subunit protein bL31 (75 aa).

This sequence belongs to the bacterial ribosomal protein bL31 family. Type A subfamily. In terms of assembly, part of the 50S ribosomal subunit.

Binds the 23S rRNA. The sequence is that of Large ribosomal subunit protein bL31 from Nitrobacter winogradskyi (strain ATCC 25391 / DSM 10237 / CIP 104748 / NCIMB 11846 / Nb-255).